Here is a 282-residue protein sequence, read N- to C-terminus: 5'-nucleotidase SurE (282 aa).

A divalent metal cation is bound by residues Asp12, Asp13, Ser43, and Asn98.

This sequence belongs to the SurE nucleotidase family. A divalent metal cation is required as a cofactor.

The protein resides in the cytoplasm. The catalysed reaction is a ribonucleoside 5'-phosphate + H2O = a ribonucleoside + phosphate. Nucleotidase that shows phosphatase activity on nucleoside 5'-monophosphates. The sequence is that of 5'-nucleotidase SurE from Hyperthermus butylicus (strain DSM 5456 / JCM 9403 / PLM1-5).